Consider the following 283-residue polypeptide: Peroxisome biogenesis protein 22 (283 aa).

A2 is modified (N-acetylalanine). Residues 45–62 (IGAIAGLAIAVIFTWRAI) traverse the membrane as a helical segment. Residues 66-107 (GEQRQRRQPKRRIHNAETSSAAAAASQSNLASSVAPEVSSPR) are disordered. Residues 81–100 (AETSSAAAAASQSNLASSVA) are compositionally biased toward low complexity.

It belongs to the peroxin-22 family. As to quaternary structure, interacts with PEX4.

The protein localises to the peroxisome membrane. In terms of biological role, may be tethered PEX4 to the peroxisome membrane and may be involved in a late step of the matrix protein import. Does not play a role in the biogenesis of the peroxisomal membrane. This Arabidopsis thaliana (Mouse-ear cress) protein is Peroxisome biogenesis protein 22 (PEX22).